A 314-amino-acid chain; its full sequence is Olfactory receptor 9A1 (314 aa).

Residues 1 to 24 are Extracellular-facing; that stretch reads MLGNYSSATEFFLLGFPGSQEVCR. An N-linked (GlcNAc...) asparagine glycan is attached at Asn4. The helical transmembrane segment at 25-45 threads the bilayer; sequence ILFATFFLLYAVTVMGNVVII. The Cytoplasmic segment spans residues 46–64; it reads ITVCVDKCLQSPIYFFLGH. A helical transmembrane segment spans residues 65–85; that stretch reads LCVLEILITSTAVPFMLWGLL. Topologically, residues 86–99 are extracellular; the sequence is LPSTQIMSLTACAA. A disulfide bridge links Cys97 with Cys179. The chain crosses the membrane as a helical span at residues 100-120; that stretch reads QLYLYLSLGTLELALMGVMAV. The Cytoplasmic segment spans residues 121–140; that stretch reads DRYVAVCNPLRYNIIMNSST. Residues 141-161 traverse the membrane as a helical segment; that stretch reads FIWVIIVSWVLGFLSEIWPVY. Residues 162–196 lie on the Extracellular side of the membrane; sequence ATFQLTFCKSSVLDHFYCDRGQLLKVSCEDTLFRE. The helical transmembrane segment at 197–217 threads the bilayer; it reads FILFLMAVFIIIGSLIPTIVS. The Cytoplasmic segment spans residues 218–239; that stretch reads YTYIISTNLKIPSASGWRKSFS. The helical transmembrane segment at 240 to 260 threads the bilayer; sequence TCASHFTYVVIGYGSCLFLYV. The Extracellular portion of the chain corresponds to 261–271; sequence KPKQTQAAEYN. A helical transmembrane segment spans residues 272-292; that stretch reads RVVSLLVLVVTPFLNPFIFTL. Residues 293–314 are Cytoplasmic-facing; sequence RNDKFIQAFGDGMKHCYKLLKN.

This sequence belongs to the G-protein coupled receptor 1 family.

The protein localises to the cell membrane. In terms of biological role, odorant receptor. The chain is Olfactory receptor 9A1 (OR9A1P) from Homo sapiens (Human).